Reading from the N-terminus, the 234-residue chain is MFSRIALLPAFLPVALACLGYEGGVPTPTAHYSNSAVIEIAAGEVFDAGWAKYDRGSGACGGQTEGDWKDAVFYLHSGATLKNVIIGADQSEGVHCDGACTLEFVWFEDVCEDAISIKNDKEGEETWIIGGGAYHADDKVVQHNGCGTVNIINFYAEDYGKVYRSCGNCSSQCKRNVYVEGTTARDGGEVVGINQSFGDTATLVNVCTDADHPCVLYDGCEGDCEPSKVGYCSG.

The N-terminal stretch at 1–17 is a signal peptide; sequence MFSRIALLPAFLPVALA. 2 N-linked (GlcNAc...) asparagine glycosylation sites follow: N168 and N194.

Belongs to the polysaccharide lyase 3 family. The cofactor is Ca(2+).

It localises to the secreted. The enzyme catalyses Eliminative cleavage of (1-&gt;4)-alpha-D-galacturonan to give oligosaccharides with 4-deoxy-alpha-D-galact-4-enuronosyl groups at their non-reducing ends.. Its function is as follows. Pectinolytic enzyme consist of four classes of enzymes: pectin lyase, polygalacturonase, pectin methylesterase and rhamnogalacturonase. Among pectinolytic enzymes, pectin lyase is the most important in depolymerization of pectin, since it cleaves internal glycosidic bonds of highly methylated pectins. Favors pectate, the anion, over pectin, the methyl ester. This chain is Probable pectate lyase F (plyF), found in Aspergillus flavus (strain ATCC 200026 / FGSC A1120 / IAM 13836 / NRRL 3357 / JCM 12722 / SRRC 167).